A 96-amino-acid polypeptide reads, in one-letter code: Acylphosphatase (96 aa).

The Acylphosphatase-like domain occupies 4 to 96 (RCEFLIFGKV…ESLNDFEILR (93 aa)). Active-site residues include R19 and N42.

Belongs to the acylphosphatase family.

The enzyme catalyses an acyl phosphate + H2O = a carboxylate + phosphate + H(+). This Helicobacter hepaticus (strain ATCC 51449 / 3B1) protein is Acylphosphatase (acyP).